A 436-amino-acid chain; its full sequence is GTPase Der (436 aa).

2 EngA-type G domains span residues 4 to 167 (PVVA…PKEE) and 176 to 351 (VKFS…DNHS). Residues 10–17 (GRPNVGKS), 57–61 (DTGGI), 119–122 (NKVD), 182–189 (GRPNVGKS), 229–233 (DTAGM), and 294–297 (NKWD) each bind GTP. Residues 352–436 (LRVQSSMLND…PIRVIARKRK (85 aa)) form the KH-like domain.

Belongs to the TRAFAC class TrmE-Era-EngA-EngB-Septin-like GTPase superfamily. EngA (Der) GTPase family. In terms of assembly, associates with the 50S ribosomal subunit.

Its function is as follows. GTPase that plays an essential role in the late steps of ribosome biogenesis. The polypeptide is GTPase Der (Listeria monocytogenes serotype 4b (strain F2365)).